The sequence spans 41 residues: Histone H3.2 (41 aa).

Residues 1–41 are disordered; sequence MARTKQTARKSTGAKAPRKQLASKAARKSAPATGGIKKPHR.

This sequence belongs to the histone H3 family. As to quaternary structure, the nucleosome is a histone octamer containing two molecules each of H2A, H2B, H3 and H4 assembled in one H3-H4 heterotetramer and two H2A-H2B heterodimers. The octamer wraps approximately 147 bp of DNA.

The protein resides in the nucleus. The protein localises to the chromosome. In terms of biological role, core component of nucleosome. Nucleosomes wrap and compact DNA into chromatin, limiting DNA accessibility to the cellular machineries which require DNA as a template. Histones thereby play a central role in transcription regulation, DNA repair, DNA replication and chromosomal stability. DNA accessibility is regulated via a complex set of post-translational modifications of histones, also called histone code, and nucleosome remodeling. In Tetrahymena australis, this protein is Histone H3.2.